The chain runs to 492 residues: Auxin transporter-like protein 1 (492 aa).

The Cytoplasmic portion of the chain corresponds to 1–67 (MVPREQAEEA…DAWFSCASNQ (67 aa)). The helical transmembrane segment at 68–85 (VAQVLLTLPYSFSQLGML) threads the bilayer. At 86-87 (SG) the chain is on the extracellular side. A helical membrane pass occupies residues 88–108 (VLLQLFYGFMGSWTAYLISVL). Residues 109-143 (YVEYRSRKEKEGVSFKNHVIQWFEVLDGLLGPYWK) lie on the Cytoplasmic side of the membrane. The helical transmembrane segment at 144-164 (AAGLAFNCTFLLFGSVIQLIA) threads the bilayer. Residues 165–180 (CASNIYYINDRLDKRT) lie on the Extracellular side of the membrane. A helical membrane pass occupies residues 181–201 (WTYIFGACCATTVFIPSFHNY). A topological domain (cytoplasmic) is located at residue Arg-202. Residues 203–223 (IWSFLGLGMTTYTAWYLAIAA) traverse the membrane as a helical segment. The Extracellular portion of the chain corresponds to 224–240 (LLNGQAEGITHTGPTKL). Residues 241–261 (VLYFTGATNILYTFGGHAVTV) form a helical membrane-spanning segment. The Cytoplasmic segment spans residues 262–274 (EIMHAMWKPAKFK). The chain crosses the membrane as a helical span at residues 275–295 (YIYLLATLYVFTLTLPSASAM). Topologically, residues 296 to 322 (YWAFGDELLTHSNAFSLLPKTGWRDAA) are extracellular. The helical transmembrane segment at 323 to 343 (VILMLIHQFITFGFACTPLYF) threads the bilayer. Residues 344 to 364 (VWEKVIGMHDTKSICLRALAR) lie on the Cytoplasmic side of the membrane. The helical transmembrane segment at 365 to 385 (LPIVVPIWFLAIIFPFFGPIN) threads the bilayer. A topological domain (extracellular) is located at residue Ser-386. The chain crosses the membrane as a helical span at residues 387 to 407 (AVGALLVSFTVYIIPALAHIL). Residues 408-432 (TYRTASARMNAAEKPPFFLPSWTGM) are Cytoplasmic-facing. Residues 433 to 453 (FVLNMFIVVWVLVVGFGLGGW) traverse the membrane as a helical segment. Topologically, residues 454 to 492 (ASMVNFIRQIDTFGLFAKCYQCPKPAPALAQSPVPLPHH) are extracellular.

The protein belongs to the amino acid/polyamine transporter 2 family. Amino acid/auxin permease (AAAP) (TC 2.A.18.1) subfamily.

Its subcellular location is the cell membrane. Carrier protein involved in proton-driven auxin influx. May mediate the formation of auxin gradient from developing leaves (site of auxin biosynthesis) to tips. The chain is Auxin transporter-like protein 1 from Oryza sativa subsp. japonica (Rice).